The sequence spans 287 residues: 4,4'-diapophytoene synthase (287 aa).

(2E,6E)-farnesyl diphosphate contacts are provided by residues 18-21 (HSKS), Tyr-41, and Arg-45. 2 residues coordinate Mg(2+): Asp-48 and Asp-52. Gln-165 provides a ligand contact to (2E,6E)-farnesyl diphosphate. Residue Asn-168 participates in Mg(2+) binding. Residue Arg-171 participates in (2E,6E)-farnesyl diphosphate binding. Asp-172 contacts Mg(2+). Position 248 (Tyr-248) interacts with (2E,6E)-farnesyl diphosphate.

Belongs to the phytoene/squalene synthase family. CrtM subfamily. Mg(2+) is required as a cofactor.

The catalysed reaction is 2 (2E,6E)-farnesyl diphosphate = 15-cis-4,4'-diapophytoene + 2 diphosphate. It participates in carotenoid biosynthesis; staphyloxanthin biosynthesis; staphyloxanthin from farnesyl diphosphate: step 1/5. Functionally, involved in the biosynthesis of the yellow-orange carotenoid staphyloxanthin, which plays a role in the virulence via its protective function against oxidative stress. Catalyzes the head-to-head condensation of two molecules of farnesyl diphosphate (FPP) into the colorless C(30) carotenoid 4,4'-diapophytoene (dehydrosqualene). The sequence is that of 4,4'-diapophytoene synthase (crtM) from Staphylococcus aureus (strain Mu50 / ATCC 700699).